The primary structure comprises 145 residues: MYPEIMLVPMREELTRIGIEETRTADAVDDAVRGTEGTLMVVVNSVCGCAAGKMRPGIRRAFDHATKPARSITVFAGQDGEATDRARGYFTGYPPSSPSIGFLREGQLVHMIQRSDIETRTADQIEALLTQAFDQYCGATAGAKS.

Belongs to the bacilliredoxin family.

The chain is Bacilliredoxin Acid345_1880 from Koribacter versatilis (strain Ellin345).